Reading from the N-terminus, the 435-residue chain is GTPase Obg (435 aa).

In terms of domain architecture, Obg spans 1–158 (MFIDRAKIYV…RWLYLELKLL (158 aa)). An OBG-type G domain is found at 159–328 (ADVGLVGLPN…LLELMEKYVR (170 aa)). Residues 165–172 (GLPNAGKS), 190–194 (FTTKT), 211–214 (DIPG), 280–283 (NKID), and 309–311 (SAK) each bind GTP. Residues Ser172 and Thr192 each coordinate Mg(2+). An OCT domain is found at 343 to 426 (IQETKEGRVE…IGDYIFKYNA (84 aa)).

Belongs to the TRAFAC class OBG-HflX-like GTPase superfamily. OBG GTPase family. Monomer. Mg(2+) serves as cofactor.

The protein resides in the cytoplasm. An essential GTPase which binds GTP, GDP and possibly (p)ppGpp with moderate affinity, with high nucleotide exchange rates and a fairly low GTP hydrolysis rate. Plays a role in control of the cell cycle, stress response, ribosome biogenesis and in those bacteria that undergo differentiation, in morphogenesis control. This is GTPase Obg from Dictyoglomus thermophilum (strain ATCC 35947 / DSM 3960 / H-6-12).